A 44-amino-acid chain; its full sequence is MLRDLGRRVAIAAILSGIILGGMSISLANMPHSPAGGTVKLNHP.

An N-terminal signal peptide occupies residues 1-28 (MLRDLGRRVAIAAILSGIILGGMSISLA).

This is an uncharacterized protein from Bacillus subtilis (strain 168).